A 429-amino-acid polypeptide reads, in one-letter code: Fc receptor-like protein 1 (429 aa).

The signal sequence occupies residues 1–16; the sequence is MLPRLLLLICAPLCEP. 3 consecutive Ig-like C2-type domains span residues 17 to 104, 109 to 200, and 208 to 291; these read AELF…SQIN, PVAD…VSIT, and PILM…EAVT. At 17–307 the chain is on the extracellular side; sequence AELFLIASPS…TGARSNHLTS (291 aa). 3 disulfides stabilise this stretch: C38–C86, C134–C183, and C229–C276. N293 is a glycosylation site (N-linked (GlcNAc...) asparagine). Residues 308-328 form a helical membrane-spanning segment; sequence GVIEGLLSTLGPATVALLFCY. Topologically, residues 329–429 are cytoplasmic; that stretch reads GLKRKIGRRS…ITDVDYEDAM (101 aa). Short sequence motifs (ITIM motif) lie at residues 354 to 359, 367 to 372, 379 to 384, 410 to 415, and 423 to 428; these read FTYLNS, PIYENV, EVYSLA, DIYSRL, and VDYEDA.

In terms of assembly, interacts with ABL1. Interacts with GRB2 and SOS1. Interacts with SHIP-1/INPP5D. In terms of processing, phosphorylated on tyrosines upon activation. Primarily expressed in secondary lymphoid tissues by mature subsets of B-cells. Detected in spleen, lymph node, heart, skeletal muscle, kidney, liver and placenta. Specifically expressed by mature B lineage cells with higher expression in naive versus memory B-cells (at protein level).

The protein localises to the cell membrane. Type I transmembrane surface glycoprotein preferentially expressed by B-cells that regulates BCR-mediated signaling responses. Recruits ABL1 as the intracellular effector molecule to enhance B-cell activation. Also plays a negative role by suppressing ERK activation under homeostatic and BCR-stimulated conditions in a GRB2-dependent manner. This is Fc receptor-like protein 1 (FCRL1) from Homo sapiens (Human).